We begin with the raw amino-acid sequence, 246 residues long: NH(3)-dependent NAD(+) synthetase (246 aa).

Residue Gly-29–Ser-36 participates in ATP binding. Asp-35 provides a ligand contact to Mg(2+). Arg-110 is a binding site for deamido-NAD(+). Position 130 (Thr-130) interacts with ATP. A Mg(2+)-binding site is contributed by Glu-135. The ATP site is built by Lys-159 and Ser-181.

This sequence belongs to the NAD synthetase family. In terms of assembly, homodimer.

It carries out the reaction deamido-NAD(+) + NH4(+) + ATP = AMP + diphosphate + NAD(+) + H(+). It functions in the pathway cofactor biosynthesis; NAD(+) biosynthesis; NAD(+) from deamido-NAD(+) (ammonia route): step 1/1. Its function is as follows. Catalyzes the ATP-dependent amidation of deamido-NAD to form NAD. Uses ammonia as a nitrogen source. The sequence is that of NH(3)-dependent NAD(+) synthetase from Campylobacter jejuni subsp. jejuni serotype O:6 (strain 81116 / NCTC 11828).